Here is a 93-residue protein sequence, read N- to C-terminus: Putative defensin-like protein 190 (93 aa).

An N-terminal signal peptide occupies residues 1-30 (MKMAKAAATNDFGFITCLVIFLVLAGISNG). 4 cysteine pairs are disulfide-bonded: Cys-39-Cys-89, Cys-55-Cys-75, Cys-60-Cys-84, and Cys-64-Cys-86.

Belongs to the DEFL family.

Its subcellular location is the secreted. In Arabidopsis thaliana (Mouse-ear cress), this protein is Putative defensin-like protein 190.